Here is a 193-residue protein sequence, read N- to C-terminus: dCTP deaminase (193 aa).

Residues arginine 110–arginine 115, aspartate 128, valine 136–glutamate 138, tyrosine 171, lysine 178, and glutamine 182 each bind dCTP. Glutamate 138 serves as the catalytic Proton donor/acceptor. Positions arginine 174 to aspartate 193 are disordered.

This sequence belongs to the dCTP deaminase family. Homotrimer.

The enzyme catalyses dCTP + H2O + H(+) = dUTP + NH4(+). It functions in the pathway pyrimidine metabolism; dUMP biosynthesis; dUMP from dCTP (dUTP route): step 1/2. In terms of biological role, catalyzes the deamination of dCTP to dUTP. The protein is dCTP deaminase of Shewanella sp. (strain W3-18-1).